The sequence spans 860 residues: Photoactivated adenylate cyclase subunit beta (860 aa).

The BLUF 1 domain occupies 56–149 (LRRLMYLSKS…GRMYGDWHMK (94 aa)). The region spanning 205-333 (VVTFIYLVEF…DCINTTSRIA (129 aa)) is the Guanylate cyclase 1 domain. The interval 420 to 443 (RPPIFDDTPKGKPRPRTPGYGGRQ) is disordered. Residues 471 to 563 (LTTLTYISQA…RAYPAEWTLT (93 aa)) enclose the BLUF 2 domain. A Guanylate cyclase 2 domain is found at 619 to 748 (VMLATDICSF…AVSARVMEVE (130 aa)). Residues 819-860 (KPLALEPEEAKQDYRVSPGRMRHGDSGRRSNSAQGKRSTQVR) form a disordered region. Residues 847 to 860 (RSNSAQGKRSTQVR) are compositionally biased toward polar residues.

This sequence belongs to the adenylyl cyclase class-4/guanylyl cyclase family. Heterotetramer of two alpha and two beta subunits. Requires FAD as cofactor.

It is found in the cell projection. Its subcellular location is the cilium. The protein resides in the flagellum. The enzyme catalyses ATP = 3',5'-cyclic AMP + diphosphate. Its function is as follows. Acts as a photoreceptor for the step-up photophobic response. This is Photoactivated adenylate cyclase subunit beta from Euglena longa (Euglenophycean alga).